The primary structure comprises 149 residues: D-aminoacyl-tRNA deacylase (149 aa).

The Gly-cisPro motif, important for rejection of L-amino acids signature appears at 137–138 (GP).

Belongs to the DTD family. In terms of assembly, homodimer.

Its subcellular location is the cytoplasm. It carries out the reaction glycyl-tRNA(Ala) + H2O = tRNA(Ala) + glycine + H(+). The catalysed reaction is a D-aminoacyl-tRNA + H2O = a tRNA + a D-alpha-amino acid + H(+). An aminoacyl-tRNA editing enzyme that deacylates mischarged D-aminoacyl-tRNAs. Also deacylates mischarged glycyl-tRNA(Ala), protecting cells against glycine mischarging by AlaRS. Acts via tRNA-based rather than protein-based catalysis; rejects L-amino acids rather than detecting D-amino acids in the active site. By recycling D-aminoacyl-tRNA to D-amino acids and free tRNA molecules, this enzyme counteracts the toxicity associated with the formation of D-aminoacyl-tRNA entities in vivo and helps enforce protein L-homochirality. This chain is D-aminoacyl-tRNA deacylase, found in Paracoccus denitrificans (strain Pd 1222).